Reading from the N-terminus, the 238-residue chain is Orotate phosphoribosyltransferase (238 aa).

Lys29 serves as a coordination point for 5-phospho-alpha-D-ribose 1-diphosphate. Residue 37-38 (FF) participates in orotate binding. 5-phospho-alpha-D-ribose 1-diphosphate-binding positions include 87-88 (YK), Arg118, Lys119, Lys122, His124, and 144-152 (DDVITAGTA). Thr148 and Arg176 together coordinate orotate.

Belongs to the purine/pyrimidine phosphoribosyltransferase family. PyrE subfamily. Homodimer.

The enzyme catalyses orotidine 5'-phosphate + diphosphate = orotate + 5-phospho-alpha-D-ribose 1-diphosphate. It functions in the pathway pyrimidine metabolism; UMP biosynthesis via de novo pathway; UMP from orotate: step 1/2. Its function is as follows. Catalyzes the transfer of a ribosyl phosphate group from 5-phosphoribose 1-diphosphate to orotate, leading to the formation of orotidine monophosphate (OMP). In Coccidioides immitis (strain RS) (Valley fever fungus), this protein is Orotate phosphoribosyltransferase (URA5).